The sequence spans 288 residues: N-glycosylase/DNA lyase (288 aa).

8-oxoguanine-binding residues include glutamine 35, serine 62, and tryptophan 73. The helix-hairpin-helix stretch occupies residues 134-203; that stretch reads NPLVLVERPS…VACASISSEM (70 aa). Lysine 160 functions as the Schiff-base intermediate with DNA in the catalytic mechanism. 2 residues coordinate 8-oxoguanine: phenylalanine 164 and proline 189. Aspartate 191 is an active-site residue. Positions 238 and 242 each coordinate 8-oxoguanine.

It belongs to the archaeal N-glycosylase/DNA lyase (AGOG) family.

The enzyme catalyses 2'-deoxyribonucleotide-(2'-deoxyribose 5'-phosphate)-2'-deoxyribonucleotide-DNA = a 3'-end 2'-deoxyribonucleotide-(2,3-dehydro-2,3-deoxyribose 5'-phosphate)-DNA + a 5'-end 5'-phospho-2'-deoxyribonucleoside-DNA + H(+). In terms of biological role, DNA repair enzyme that is part of the base excision repair (BER) pathway; protects from oxidative damage by removing the major product of DNA oxidation, 8-oxoguanine (GO), from single- and double-stranded DNA substrates. This chain is N-glycosylase/DNA lyase, found in Aeropyrum pernix (strain ATCC 700893 / DSM 11879 / JCM 9820 / NBRC 100138 / K1).